The primary structure comprises 476 residues: Eukaryotic translation initiation factor 3 subunit L (476 aa).

In terms of domain architecture, PCI spans 257–452 (DAIRMFSHIL…DLDYALENDL (196 aa)).

The protein belongs to the eIF-3 subunit L family. Component of the eukaryotic translation initiation factor 3 (eIF-3) complex.

The protein localises to the cytoplasm. Component of the eukaryotic translation initiation factor 3 (eIF-3) complex, which is involved in protein synthesis of a specialized repertoire of mRNAs and, together with other initiation factors, stimulates binding of mRNA and methionyl-tRNAi to the 40S ribosome. The eIF-3 complex specifically targets and initiates translation of a subset of mRNAs involved in cell proliferation. In Aspergillus fumigatus (strain CBS 144.89 / FGSC A1163 / CEA10) (Neosartorya fumigata), this protein is Eukaryotic translation initiation factor 3 subunit L.